Reading from the N-terminus, the 116-residue chain is Hydrogenase maturation factor HypA (116 aa).

H2 is a binding site for Ni(2+). Zn(2+) contacts are provided by C73, C76, C90, and C93.

Belongs to the HypA/HybF family.

In terms of biological role, involved in the maturation of [NiFe] hydrogenases. Required for nickel insertion into the metal center of the hydrogenase. This is Hydrogenase maturation factor HypA from Escherichia coli O157:H7.